The sequence spans 469 residues: Chromosomal replication initiator protein DnaA (469 aa).

The domain I, interacts with DnaA modulators stretch occupies residues 1-83; the sequence is MSEWDYKIFW…KKISIDFIIK (83 aa). A domain II region spans residues 83-128; it reads KPNTSEDLSKAENEGGNDKKEDAAKPSSAESKKKSVKTEGGRGQHP. Residues 89–131 form a disordered region; the sequence is DLSKAENEGGNDKKEDAAKPSSAESKKKSVKTEGGRGQHPDLR. The segment at 129 to 344 is domain III, AAA+ region; it reads DLRPEYNFED…AALTKLIAYT (216 aa). Residues Gly-173, Gly-175, Lys-176, and Thr-177 each contribute to the ATP site. The segment at 345–469 is domain IV, binds dsDNA; the sequence is ELTKKTMDEA…RNTIKENTNK (125 aa).

This sequence belongs to the DnaA family. Oligomerizes as a right-handed, spiral filament on DNA at oriC.

The protein resides in the cytoplasm. Functionally, plays an essential role in the initiation and regulation of chromosomal replication. ATP-DnaA binds to the origin of replication (oriC) to initiate formation of the DNA replication initiation complex once per cell cycle. Binds the DnaA box (a 9 base pair repeat at the origin) and separates the double-stranded (ds)DNA. Forms a right-handed helical filament on oriC DNA; dsDNA binds to the exterior of the filament while single-stranded (ss)DNA is stabiized in the filament's interior. The ATP-DnaA-oriC complex binds and stabilizes one strand of the AT-rich DNA unwinding element (DUE), permitting loading of DNA polymerase. After initiation quickly degrades to an ADP-DnaA complex that is not apt for DNA replication. Binds acidic phospholipids. The chain is Chromosomal replication initiator protein DnaA from Treponema denticola (strain ATCC 35405 / DSM 14222 / CIP 103919 / JCM 8153 / KCTC 15104).